The primary structure comprises 92 residues: Small ribosomal subunit protein uS19 (92 aa).

It belongs to the universal ribosomal protein uS19 family.

Functionally, protein S19 forms a complex with S13 that binds strongly to the 16S ribosomal RNA. This chain is Small ribosomal subunit protein uS19, found in Methylorubrum extorquens (strain CM4 / NCIMB 13688) (Methylobacterium extorquens).